Here is a 1373-residue protein sequence, read N- to C-terminus: Inactive tyrosine-protein kinase PRAG1 (1373 aa).

Disordered stretches follow at residues 31–50 and 197–235; these read AGHPKARANSLPAGTRLPAR and TSSCPKGPRPCTSPQPLRESLPSEDDSDQRCSPSGDSEG. At Tyr238 the chain carries Phosphotyrosine. Basic and acidic residues-rich tracts occupy residues 250-263 and 272-284; these read DAVHSTEGSGRRGG and QGPRTRPTEEEKQ. The interval 250–338 is disordered; it reads DAVHSTEGSG…SGASSPFAPH (89 aa). A compositionally biased stretch (low complexity) spans 317 to 333; it reads SSSDGLSCGSSRSGASS. Phosphotyrosine is present on residues Tyr343 and Tyr391. 2 disordered regions span residues 376 to 448 and 468 to 794; these read QPAS…NPAP and IYLS…LPQK. Positions 419 to 438 are enriched in polar residues; the sequence is SQGQVWTGDTWIQKTPPSWS. The segment covering 506–522 has biased composition (basic and acidic residues); that stretch reads RESHPHNVTENTAKEKP. Residues 526–538 show a composition bias toward low complexity; the sequence is PKLSKSSPGGSPV. Polar residues-rich tracts occupy residues 568-578 and 655-670; these read NLTSSCHTNGV and TSGQNSKTNSGMSKSA. Ser671 and Ser720 each carry phosphoserine. Composition is skewed to polar residues over residues 711 to 721 and 729 to 740; these read VSQSSAESLSP and SFTTGSTDSLAS. Ser757 and Ser802 each carry phosphoserine. The disordered stretch occupies residues 804 to 823; the sequence is PDGFFWTQGSPKPRTASPKL. Residues 911–954 are required for homodimerization; that stretch reads STQLQLHSLLSSISSKEGTYAKLGGLYTQSLARLVTKCEDLFMG. The region spanning 945 to 1296 is the Protein kinase domain; sequence VTKCEDLFMG…EAKRVLQCLL (352 aa). Polar residues predominate over residues 1041–1050; the sequence is LASPDTSSKD. Disordered regions lie at residues 1041–1062 and 1138–1171; these read LASPDTSSKDTAPAVSPQPPAQ and QSSPGPSATPTVPTTTSRCPSAAPAATTACQGGP. Residues 1139-1167 show a composition bias toward low complexity; sequence SSPGPSATPTVPTTTSRCPSAAPAATTAC. The interval 1298-1373 is required for homodimerization; the sequence is GPRRELVEQP…LQSLKLLQLL (76 aa).

The protein belongs to the protein kinase superfamily. In terms of assembly, homodimer. Dimerization leads to the catalytic activation of CSK. Interacts (via C-terminus) with RND2. Interacts with CSK (via SH2 domain) in a Tyr-391 phosphorylation-dependent manner; this interaction potentiates kinase activity of CSK. Interacts with NOTCH1 intracellular domain (N1ICD). Forms a complex with PRAG1, N1ICD and MAML1, in a MAML1-dependent manner. Phosphorylated by CSK on Tyr-238, Tyr-343, and Tyr-391; Tyr-391 is a primary site of phosphorylation.

Its subcellular location is the cytoplasm. The protein resides in the nucleus. It is found in the cell junction. The protein localises to the focal adhesion. Its function is as follows. Catalytically inactive protein kinase that acts as a scaffold protein. Functions as an effector of the small GTPase RND2, which stimulates RhoA activity and inhibits NGF-induced neurite outgrowth. Promotes Src family kinase (SFK) signaling by regulating the subcellular localization of CSK, a negative regulator of these kinases, leading to the regulation of cell morphology and motility by a CSK-dependent mechanism. Acts as a critical coactivator of Notch signaling. This is Inactive tyrosine-protein kinase PRAG1 from Mus musculus (Mouse).